A 1501-amino-acid polypeptide reads, in one-letter code: Inactive protein tyrosine kinase pTKL (1501 aa).

Residues asparagine 64, asparagine 128, and asparagine 133 are each glycosylated (N-linked (GlcNAc...) asparagine). Residues 204 to 221 (KKNKKNKKNKKKKNKKTK) are compositionally biased toward basic residues. The tract at residues 204 to 223 (KKNKKNKKNKKKKNKKTKNT) is disordered. Asparagine 239, asparagine 242, asparagine 258, and asparagine 327 each carry an N-linked (GlcNAc...) asparagine glycan. Residues 257–273 (MNISLHEKNDKKNEKKN) show a composition bias toward basic and acidic residues. The tract at residues 257–276 (MNISLHEKNDKKNEKKNEKK) is disordered. Residues 301-366 (WSLREVIQWL…LQLIKNLQVM (66 aa)) form the SAM domain. Residues 392–425 (NKNIKKGKNIKKEKKKKKEKNIKKEKKKKKKETK) form a disordered region. Residues 394-424 (NIKKGKNIKKEKKKKKEKNIKKEKKKKKKET) show a composition bias toward basic residues. The stretch at 399-433 (KNIKKEKKKKKEKNIKKEKKKKKKETKKFNNMDKK) forms a coiled coil. N-linked (GlcNAc...) asparagine glycosylation is found at asparagine 448, asparagine 463, and asparagine 471. An RVxF motif 1 motif is present at residues 483 to 486 (KVSF). N-linked (GlcNAc...) asparagine glycosylation is present at asparagine 506. Positions 543–597 (QLSSPLSSPLSSPSPSSSPSSSPSSSPSSSPSSSPSPSSSPSPSSSPSSSPSSSP) are enriched in low complexity. Residues 543 to 607 (QLSSPLSSPL…SSPPSPLSYK (65 aa)) form a disordered region. Residue asparagine 652 is glycosylated (N-linked (GlcNAc...) asparagine). The disordered stretch occupies residues 659–678 (IKKSKSKYNNDKKEQKKLPL). Basic and acidic residues predominate over residues 666-675 (YNNDKKEQKK). Residues asparagine 681, asparagine 712, asparagine 737, asparagine 811, and asparagine 819 are each glycosylated (N-linked (GlcNAc...) asparagine). ATP-binding positions include 836 to 844 (QNINNFGKY) and lysine 864. 4 N-linked (GlcNAc...) asparagine glycosylation sites follow: asparagine 1024, asparagine 1031, asparagine 1074, and asparagine 1157. A Protein kinase domain is found at 1088–1483 (FHYQHNVLCG…HILKTISTLY (396 aa)). The short motif at 1238 to 1241 (KVLF) is the RVxF motif 2 element. The N-linked (GlcNAc...) asparagine glycan is linked to asparagine 1382.

This sequence belongs to the protein kinase superfamily. TKL Ser/Thr protein kinase family. As to quaternary structure, interacts (via RVxF motif 1 and/or 2) with phosphatase PP1C. May interact (via SAM domain) with SERA5 (via C-terminus).

It is found in the parasitophorous vacuole. The protein resides in the host cell membrane. It localises to the host cytoplasm. The protein localises to the host cytoskeleton. This is Inactive protein tyrosine kinase pTKL from Plasmodium falciparum (isolate 3D7).